The sequence spans 174 residues: UPF0113 protein APE_0516.1 (174 aa).

This sequence belongs to the UPF0113 family.

The polypeptide is UPF0113 protein APE_0516.1 (Aeropyrum pernix (strain ATCC 700893 / DSM 11879 / JCM 9820 / NBRC 100138 / K1)).